We begin with the raw amino-acid sequence, 286 residues long: Zinc finger protein ZAT5 (286 aa).

Disordered regions lie at residues 1 to 28 (MMMG…RSSS), 40 to 60 (STSS…EYNS), and 131 to 171 (GGHR…FKVS). The segment at 115-137 (YECKTCNRTFSSFQALGGHRASH) adopts a C2H2-type 1 zinc-finger fold. The segment covering 154–171 (QPKSSASEEGQNSHFKVS) has biased composition (polar residues). The C2H2-type 2 zinc finger occupies 190-212 (HECSICGSEFTSGQALGGHMRRH).

In terms of tissue distribution, expressed in flowers and siliques.

The protein resides in the nucleus. Functionally, probable transcription factor that may be involved in stress responses. This is Zinc finger protein ZAT5 (ZAT5) from Arabidopsis thaliana (Mouse-ear cress).